A 61-amino-acid polypeptide reads, in one-letter code: Small ribosomal subunit protein uS14 (61 aa).

Positions 1–14 (MAKTSQKVRNHRPA) are enriched in basic residues. A disordered region spans residues 1–20 (MAKTSQKVRNHRPAKFSSRE). Residues C24, C27, C40, and C43 each contribute to the Zn(2+) site.

Belongs to the universal ribosomal protein uS14 family. Zinc-binding uS14 subfamily. Part of the 30S ribosomal subunit. Contacts proteins S3 and S10. Zn(2+) is required as a cofactor.

In terms of biological role, binds 16S rRNA, required for the assembly of 30S particles and may also be responsible for determining the conformation of the 16S rRNA at the A site. The chain is Small ribosomal subunit protein uS14 from Lactobacillus delbrueckii subsp. bulgaricus (strain ATCC 11842 / DSM 20081 / BCRC 10696 / JCM 1002 / NBRC 13953 / NCIMB 11778 / NCTC 12712 / WDCM 00102 / Lb 14).